The following is a 555-amino-acid chain: uncharacterized protein (555 aa).

The signal sequence occupies residues methionine 1 to alanine 28. The N-palmitoyl cysteine moiety is linked to residue cysteine 29. A lipid anchor (S-diacylglycerol cysteine) is attached at cysteine 29.

It to M.tuberculosis Rv2585c and M.bovis Mb2616c.

Its subcellular location is the cell membrane. This is an uncharacterized protein from Mycobacterium leprae (strain TN).